Here is a 342-residue protein sequence, read N- to C-terminus: Trans-3-hydroxy-L-proline dehydratase (342 aa).

Catalysis depends on serine 90, which acts as the Proton acceptor. Residues 91 to 92 (GS), aspartate 252, and 257 to 258 (GT) each bind substrate.

The protein belongs to the proline racemase family.

It carries out the reaction trans-3-hydroxy-L-proline = 1-pyrroline-2-carboxylate + H2O. Catalyzes the dehydration of trans-3-hydroxy-L-proline (t3LHyp) to Delta(1)-pyrroline-2-carboxylate (Pyr2C). Can also catalyze the epimerization of trans-4-hydroxy-L-proline (t4LHyp) to cis-4-hydroxy-D-proline (c4DHyp), albeit with 150-fold lower efficiency. May be involved in the degradation pathway that converts t3LHyp to L-proline, which would allow R.meliloti to grow on t3LHyp as a sole carbon source. Displays no proline racemase activity. This Rhizobium meliloti (strain 1021) (Ensifer meliloti) protein is Trans-3-hydroxy-L-proline dehydratase.